Here is a 305-residue protein sequence, read N- to C-terminus: Ornithine carbamoyltransferase (305 aa).

Carbamoyl phosphate-binding positions include 50–53 (STRT), Q77, R101, and 128–131 (HPCQ). Residues N162, D220, and 224–225 (SM) each bind L-ornithine. Carbamoyl phosphate contacts are provided by residues 260–261 (CL) and R288.

The protein belongs to the aspartate/ornithine carbamoyltransferase superfamily. OTCase family.

It is found in the cytoplasm. It carries out the reaction carbamoyl phosphate + L-ornithine = L-citrulline + phosphate + H(+). Its pathway is amino-acid degradation; L-arginine degradation via ADI pathway; carbamoyl phosphate from L-arginine: step 2/2. Reversibly catalyzes the transfer of the carbamoyl group from carbamoyl phosphate (CP) to the N(epsilon) atom of ornithine (ORN) to produce L-citrulline. The chain is Ornithine carbamoyltransferase from Akkermansia muciniphila (strain ATCC BAA-835 / DSM 22959 / JCM 33894 / BCRC 81048 / CCUG 64013 / CIP 107961 / Muc).